The primary structure comprises 355 residues: Septin-2B (355 aa).

The region spanning 33–305 is the Septin-type G domain; the sequence is KGFEFTLMVV…ENFRSERLKK (273 aa). A G1 motif region spans residues 43 to 50; the sequence is GESGLGKS. GTP contacts are provided by residues 43–50, Thr77, Gly103, 182–190, Gly240, and Arg255; these read GESGLGKS and KADTLTLRE. The tract at residues 100-103 is G3 motif; it reads DTPG. The interval 181–184 is G4 motif; it reads AKAD. An important for dimerization region spans residues 259–269; the sequence is WGVVEVENPEH.

The protein belongs to the TRAFAC class TrmE-Era-EngA-EngB-Septin-like GTPase superfamily. Septin GTPase family. As to quaternary structure, septins polymerize into heterooligomeric protein complexes that form filaments, and associate with cellular membranes, actin filaments and microtubules. GTPase activity is required for filament formation. Can form heterooligomers with other family members and form filaments. Interacts with wdpcp.

The protein resides in the cytoplasm. Its subcellular location is the cytoskeleton. It is found in the spindle. It localises to the cleavage furrow. The protein localises to the midbody. The protein resides in the cell cortex. Its subcellular location is the cell projection. It is found in the cilium membrane. Functionally, filament-forming cytoskeletal GTPase. Required for normal organization of the actin cytoskeleton. Plays a role in the biogenesis of polarized columnar-shaped epithelium. Required for the progression through mitosis through regulation of chromosome congression. During anaphase, may be required for chromosome segregation and spindle elongation. Plays a role in ciliogenesis and collective cell movements including convergent extension during gastrulation. In cilia, required for the integrity of the diffusion barrier at the base of the primary cilium that prevents diffusion of transmembrane proteins between the cilia and plasma membranes. Controls cell shape and not polarization of cells during convergent extension. The protein is Septin-2B (sept2-B) of Xenopus tropicalis (Western clawed frog).